Reading from the N-terminus, the 86-residue chain is MATKKAGGSSRNGRDSAGRRLGVKKADGQYVIPGNIIVRQRGTKIHPGTNVGLGKDHTIFALIEGRVEFLTKRNHKIVNVKEIAST.

The disordered stretch occupies residues 1–24 (MATKKAGGSSRNGRDSAGRRLGVK).

The protein belongs to the bacterial ribosomal protein bL27 family.

The protein is Large ribosomal subunit protein bL27 of Rickettsia conorii (strain ATCC VR-613 / Malish 7).